The following is a 291-amino-acid chain: 4-hydroxy-tetrahydrodipicolinate synthase (291 aa).

Residue T45 coordinates pyruvate. Y133 serves as the catalytic Proton donor/acceptor. The active-site Schiff-base intermediate with substrate is the K161. I203 is a binding site for pyruvate.

Belongs to the DapA family. Homotetramer; dimer of dimers.

The protein resides in the cytoplasm. The catalysed reaction is L-aspartate 4-semialdehyde + pyruvate = (2S,4S)-4-hydroxy-2,3,4,5-tetrahydrodipicolinate + H2O + H(+). Its pathway is amino-acid biosynthesis; L-lysine biosynthesis via DAP pathway; (S)-tetrahydrodipicolinate from L-aspartate: step 3/4. Its function is as follows. Catalyzes the condensation of (S)-aspartate-beta-semialdehyde [(S)-ASA] and pyruvate to 4-hydroxy-tetrahydrodipicolinate (HTPA). In Neisseria gonorrhoeae (strain ATCC 700825 / FA 1090), this protein is 4-hydroxy-tetrahydrodipicolinate synthase.